A 175-amino-acid chain; its full sequence is Ribulose bisphosphate carboxylase small subunit, chloroplastic (175 aa).

The transit peptide at 1–46 (MAPTVMASSATSVAPFQGLKSTAGLPVSRRSNGASLGSVSNGGRIR) directs the protein to the chloroplast.

Belongs to the RuBisCO small chain family. In terms of assembly, heterohexadecamer of 8 large and 8 small subunits.

The protein localises to the plastid. Its subcellular location is the chloroplast. Functionally, ruBisCO catalyzes two reactions: the carboxylation of D-ribulose 1,5-bisphosphate, the primary event in carbon dioxide fixation, as well as the oxidative fragmentation of the pentose substrate. Both reactions occur simultaneously and in competition at the same active site. Although the small subunit is not catalytic it is essential for maximal activity. The polypeptide is Ribulose bisphosphate carboxylase small subunit, chloroplastic (Aegilops tauschii (Tausch's goatgrass)).